The sequence spans 382 residues: Protein MSN1 (382 aa).

The leucine-zipper stretch occupies residues 12 to 26; it reads LNENEAILTNRVAEL. 2 stretches are compositionally biased toward polar residues: residues 104 to 114 and 122 to 138; these read TLDPQGFTDGT and NYTSVPMNNDQTAHPQN. Disordered regions lie at residues 104 to 138 and 155 to 260; these read TLDPQGFTDGTTAPGAPRNYTSVPMNNDQTAHPQN and NSQE…EEEQ. A compositionally biased stretch (low complexity) spans 162 to 180; sequence SQQQTNSSNSISQENNSTN. Polar residues-rich tracts occupy residues 181-198 and 207-221; these read PSVDTRFNKPQNYNSNLV and NPPNNDGGQSQGLYI. The span at 222–231 shows a compositional bias: low complexity; that stretch reads SSNSSQSRQS. The segment covering 232 to 253 has biased composition (polar residues); sequence PNLQKVSPNHENAVESNAQESV. The short motif at 266–271 is the Nuclear localization signal element; the sequence is GLKRKR.

It is found in the nucleus. Functionally, may function as a transcriptional activator. Increased dosage of MSN1 restores invertase expression in yeast mutants defective in the SNF1 protein kinase, and msn1 disruption reduced derepression of invertase in the wild-type. May affect SUC2 expression. Expression of MSN1 enhances growth in iron-limiting conditions. This chain is Protein MSN1 (MSN1), found in Saccharomyces cerevisiae (strain ATCC 204508 / S288c) (Baker's yeast).